Consider the following 824-residue polypeptide: U-box domain-containing protein 24 (824 aa).

Residues 13 to 92 form the U-box domain; it reads GAFEAFVCPL…HEWRARNEEK (80 aa). ARM repeat units lie at residues 133-172, 175-214, 217-258, 260-299, 300-339, 341-385, 396-435, 441-481, and 486-525; these read AASK…VLVE, DDNK…ELSG, PTCE…NLDR, DANV…ELAL, ANDD…EISS, EASA…NLVA, DDDE…PAIG, VLAG…DIRV, and LLRN…EEQA.

In terms of assembly, interacts with BZR1, BZR2, BZR3 and GSK2. In terms of processing, auto-ubiquitinated. Phosphorylated by GSK2. Phosphorylation of PUB24 increases its cellular stability.

The protein resides in the cytoplasm. It localises to the cytosol. The protein localises to the nucleus. It catalyses the reaction S-ubiquitinyl-[E2 ubiquitin-conjugating enzyme]-L-cysteine + [acceptor protein]-L-lysine = [E2 ubiquitin-conjugating enzyme]-L-cysteine + N(6)-ubiquitinyl-[acceptor protein]-L-lysine.. Its pathway is protein modification; protein ubiquitination. In terms of biological role, E3 ubiquitin-protein ligase that functions as a negative regulator of brassinosteroid (BR) signaling. Targets BZR1, a positive regulator of BR signaling pathway, and promotes its degradation via the ubiquitin-26S proteasome pathway. This is U-box domain-containing protein 24 from Oryza sativa subsp. japonica (Rice).